The sequence spans 155 residues: Aspartate carbamoyltransferase regulatory chain (155 aa).

Residues Cys-112, Cys-117, Cys-140, and Cys-143 each contribute to the Zn(2+) site.

The protein belongs to the PyrI family. As to quaternary structure, contains catalytic and regulatory chains. Zn(2+) serves as cofactor.

Involved in allosteric regulation of aspartate carbamoyltransferase. In Phocaeicola vulgatus (strain ATCC 8482 / DSM 1447 / JCM 5826 / CCUG 4940 / NBRC 14291 / NCTC 11154) (Bacteroides vulgatus), this protein is Aspartate carbamoyltransferase regulatory chain.